The primary structure comprises 881 residues: Valine--tRNA ligase (881 aa).

A 'HIGH' region motif is present at residues Pro-42 to His-52. The 'KMSKS' region motif lies at Lys-554–Ser-558. Lys-557 is a binding site for ATP.

This sequence belongs to the class-I aminoacyl-tRNA synthetase family. ValS type 1 subfamily. As to quaternary structure, monomer.

It is found in the cytoplasm. The catalysed reaction is tRNA(Val) + L-valine + ATP = L-valyl-tRNA(Val) + AMP + diphosphate. In terms of biological role, catalyzes the attachment of valine to tRNA(Val). As ValRS can inadvertently accommodate and process structurally similar amino acids such as threonine, to avoid such errors, it has a 'posttransfer' editing activity that hydrolyzes mischarged Thr-tRNA(Val) in a tRNA-dependent manner. In Wigglesworthia glossinidia brevipalpis, this protein is Valine--tRNA ligase.